The following is a 107-amino-acid chain: MEIWHVSDARLRRTRDFGVTRLEDFCFQFNYIQPRVGYCRVPLKAWCSNQGKFAAQFTLKSCEKSGQEKVITSFTAYDKTVKKAVSKLVEEAVDFIIWRATYLERNV.

Belongs to the coronaviruses ns12.7 protein family.

The chain is Non-structural protein of 12.7 kDa from Rattus norvegicus (Rat).